A 485-amino-acid polypeptide reads, in one-letter code: UDP-N-acetylmuramoyl-L-alanyl-D-glutamate--2,6-diaminopimelate ligase (485 aa).

Ser-28 provides a ligand contact to UDP-N-acetyl-alpha-D-muramoyl-L-alanyl-D-glutamate. 108–114 provides a ligand contact to ATP; that stretch reads GTNGKTS. UDP-N-acetyl-alpha-D-muramoyl-L-alanyl-D-glutamate-binding positions include Asn-147, 148 to 149, Ser-175, and Arg-183; that span reads TT. Lys-215 is modified (N6-carboxylysine). Meso-2,6-diaminopimelate-binding positions include Arg-374, 398-401, Gly-449, and Glu-453; that span reads DNPR. Residues 398-401 carry the Meso-diaminopimelate recognition motif motif; the sequence is DNPR.

This sequence belongs to the MurCDEF family. MurE subfamily. The cofactor is Mg(2+). Carboxylation is probably crucial for Mg(2+) binding and, consequently, for the gamma-phosphate positioning of ATP.

Its subcellular location is the cytoplasm. It carries out the reaction UDP-N-acetyl-alpha-D-muramoyl-L-alanyl-D-glutamate + meso-2,6-diaminopimelate + ATP = UDP-N-acetyl-alpha-D-muramoyl-L-alanyl-gamma-D-glutamyl-meso-2,6-diaminopimelate + ADP + phosphate + H(+). It functions in the pathway cell wall biogenesis; peptidoglycan biosynthesis. Its function is as follows. Catalyzes the addition of meso-diaminopimelic acid to the nucleotide precursor UDP-N-acetylmuramoyl-L-alanyl-D-glutamate (UMAG) in the biosynthesis of bacterial cell-wall peptidoglycan. This is UDP-N-acetylmuramoyl-L-alanyl-D-glutamate--2,6-diaminopimelate ligase from Fusobacterium nucleatum subsp. nucleatum (strain ATCC 25586 / DSM 15643 / BCRC 10681 / CIP 101130 / JCM 8532 / KCTC 2640 / LMG 13131 / VPI 4355).